The chain runs to 303 residues: MFISNIFQKFFSFLFVLLITTLVCADPKKVAVIVPLEHDSMYKIVSGIQEALKDIDVEILVKNAHADPNILLAIINQIKDHDIDLIIPIGTTVSQTTISHIINKPIVCAAAIINGKNLPLVTGVNDEIKITDTISKLPFLENITLIYSSSEKVIPEVEMLKLYAKNNNISLYTAMIQNLNDMPIAVKNAPKNTQSFIILKDHLIVSGINILKQEAFVRRIPLIASDEGSVINGATIAVGVQEKQIGVEAGLMAKKILQGIAPKDIPFSDMKDFTLFINLKSFLKQDILTQENLSVLPFKHKEF.

This is an uncharacterized protein from Rickettsia prowazekii (strain Madrid E).